The chain runs to 222 residues: PKHD-type hydroxylase cce_3668 (222 aa).

The Fe2OG dioxygenase domain maps to 78-175 (HIHSLRFSRY…RLVVVGWVHS (98 aa)). Positions 96, 98, and 156 each coordinate Fe cation. A 2-oxoglutarate-binding site is contributed by Arg-166.

Requires Fe(2+) as cofactor. L-ascorbate serves as cofactor.

The chain is PKHD-type hydroxylase cce_3668 from Crocosphaera subtropica (strain ATCC 51142 / BH68) (Cyanothece sp. (strain ATCC 51142)).